Reading from the N-terminus, the 1203-residue chain is Plasma membrane calcium-transporting ATPase 4 (1203 aa).

Topologically, residues 1–92 are cytoplasmic; the sequence is MTNPSGHNLP…NMIPPKKPKT (92 aa). Residue serine 13 is modified to Phosphoserine. A helical transmembrane segment spans residues 93-113; sequence FLELVWEALQDVTLIILEIAA. The Extracellular segment spans residues 114–150; sequence IISLVLSFYRPPGGENEICGHIVSNPEEDEEGETGWI. The helical transmembrane segment at 151-171 threads the bilayer; it reads EGAAILASVIIVVFVTAFNDW. At 172 to 356 the chain is on the cytoplasmic side; the sequence is SKEKQFRGLQ…KEKSVLQGKL (185 aa). Residues 294–319 form a disordered region; the sequence is DDEKKKKGKKQGVSENRNKAKTQDGV. Phosphoserine is present on residues serine 328 and serine 334. A disordered region spans residues 330–349; it reads EGLDSEEKEKKASKGPKKEK. Basic and acidic residues predominate over residues 334–349; that stretch reads SEEKEKKASKGPKKEK. The helical transmembrane segment at 357–376 threads the bilayer; the sequence is TRLAVQIGKAGLIMSILTVL. At 377–409 the chain is on the extracellular side; the sequence is ILILYFVVDNFVIQRRAWLPECTPVYIQYFVKF. The chain crosses the membrane as a helical span at residues 410 to 427; sequence FIIGVTVLVVAVPEGLPL. The Cytoplasmic segment spans residues 428 to 840; the sequence is AVTISLAYSV…MWGRNVYDSI (413 aa). The active-site 4-aspartylphosphate intermediate is aspartate 465. Mg(2+) is bound by residues aspartate 785 and aspartate 789. A helical membrane pass occupies residues 841–860; the sequence is SKFLQFQLTVNVVAVIVAFS. Over 861–870 the chain is Extracellular; the sequence is GACITQDSPL. Residues 871 to 891 traverse the membrane as a helical segment; the sequence is KAVQMLWVNLIMDTFASLALA. Residues 892 to 911 lie on the Cytoplasmic side of the membrane; sequence TEPPTDSLLRRRPYGRNKPL. A helical transmembrane segment spans residues 912–934; it reads ISRTMMKNILGHAVYQLGIVFLL. The Extracellular segment spans residues 935–952; that stretch reads VFAGDKLFDIDSGRKAPL. Residues 953 to 974 form a helical membrane-spanning segment; sequence NSPPSQHYTIVFNTFVLMQLFN. At 975–993 the chain is on the cytoplasmic side; the sequence is EINSRKIHGEKNVFAGVYR. Residues 994-1015 traverse the membrane as a helical segment; that stretch reads NIIFCSVVLGTFFCQILIVEVG. Residues 1016 to 1025 are Extracellular-facing; it reads GKPFSCTNLT. Residues 1026–1047 form a helical membrane-spanning segment; it reads MEQWMWCLFIGIGELLWGQVIS. The Cytoplasmic segment spans residues 1048–1203; the sequence is AIPTKSLKFL…SPLQSQETPV (156 aa). 2 positions are modified to phosphoserine: serine 1064 and serine 1070. Residues 1086–1103 are calmodulin-binding subdomain A; sequence LRRGQILWVRGLNRIQTQ. Threonine 1102 bears the Phosphothreonine; by PKC mark. Glutamine 1103 bears the Phosphoserine mark. The interval 1104–1113 is calmodulin-binding subdomain B; the sequence is IRVVKVFHSF. 4 positions are modified to phosphoserine: arginine 1114, aspartate 1115, isoleucine 1126, and serine 1144.

Belongs to the cation transport ATPase (P-type) (TC 3.A.3) family. Type IIB subfamily. Interacts with PDZD11. Interacts with SLC35G1 and STIM1. Interacts with calmodulin. Ubiquitously expressed. Not detected in liver. The highest levels are found in uterus and stomach. Isoform XA is found in uterus, brain, stomach, small intestine, colon and pancreas. Isoform XB is found in uterus, skeletal muscle, lung, kidney, spleen, stomach, small intestine and pancreas. Isoform ZA is found in testis and isoform ZB is found in testis and heart.

It localises to the cell membrane. The protein resides in the cell projection. Its subcellular location is the cilium. It is found in the flagellum membrane. It carries out the reaction Ca(2+)(in) + ATP + H2O = Ca(2+)(out) + ADP + phosphate + H(+). Its activity is regulated as follows. Activated by calcium/calmodulin. In terms of biological role, calcium/calmodulin-regulated and magnesium-dependent enzyme that catalyzes the hydrolysis of ATP coupled with the transport of calcium out of the cell. By regulating sperm cell calcium homeostasis, may play a role in sperm motility. This chain is Plasma membrane calcium-transporting ATPase 4, found in Rattus norvegicus (Rat).